The chain runs to 150 residues: LAVLEKMRHIERLKQPSVIMLTAFGQEDVTKKAVDLGASYFILKPFDMENLPSHIRQVSGKANTMIKRPLPSFRSATTVDGKPKNLDASITSIIHEIGVPAHIKGYMYLREAISMVYNDIELLGSITKVLYPDIAKKYNTTASRVERAIR.

One can recognise a Response regulatory domain in the interval 1–59; it reads LAVLEKMRHIERLKQPSVIMLTAFGQEDVTKKAVDLGASYFILKPFDMENLPSHIRQVS. Residues 132-150 constitute a DNA-binding region (H-T-H motif); the sequence is PDIAKKYNTTASRVERAIR.

Requires Ca(2+) as cofactor. In terms of processing, phosphorylated by KinA and KinB.

It localises to the cytoplasm. Functionally, may play the central regulatory role in sporulation. It may be an element of the effector pathway responsible for the activation of sporulation genes in response to nutritional stress. Spo0A may act in concert with Spo0H (a sigma factor) to control the expression of some genes that are critical to the sporulation process. Repressor of abrB, activator of the spoIIa operon. Binds the DNA sequence 5'-TGNCGAA-3' (0A box). The sequence is that of Stage 0 sporulation protein A (spo0A) from Bacillus cereus.